The sequence spans 299 residues: Virginiamycin B lyase (299 aa).

His-229 is a binding site for substrate. Mg(2+) is bound at residue Glu-269. The Proton acceptor role is filled by His-271. Residue Glu-286 coordinates Mg(2+).

This sequence belongs to the Vgb family. As to quaternary structure, monomer. The cofactor is Mg(2+).

In terms of biological role, inactivates the type B streptogramin antibiotics by linearizing the lactone ring at the ester linkage, generating a free phenylglycine carboxylate and converting the threonyl moiety into 2-amino-butenoic acid. This is Virginiamycin B lyase from Bordetella bronchiseptica (strain ATCC BAA-588 / NCTC 13252 / RB50) (Alcaligenes bronchisepticus).